The following is a 196-amino-acid chain: Probable inactive nicotinamidase At3g16190 (196 aa).

It belongs to the isochorismatase family.

In terms of biological role, does not possess nicotinamidase activity in vitro. In Arabidopsis thaliana (Mouse-ear cress), this protein is Probable inactive nicotinamidase At3g16190.